Reading from the N-terminus, the 132-residue chain is Small ribosomal subunit protein uS8 (132 aa).

It belongs to the universal ribosomal protein uS8 family. As to quaternary structure, part of the 30S ribosomal subunit. Contacts proteins S5 and S12.

In terms of biological role, one of the primary rRNA binding proteins, it binds directly to 16S rRNA central domain where it helps coordinate assembly of the platform of the 30S subunit. In Geobacillus thermodenitrificans (strain NG80-2), this protein is Small ribosomal subunit protein uS8.